Reading from the N-terminus, the 198-residue chain is PEP-dependent dihydroxyacetone kinase 1, ADP-binding subunit DhaL (198 aa).

One can recognise a DhaL domain in the interval 6 to 194; it reads DWALRWLNDF…SALLFHAMLQ (189 aa). Mg(2+)-binding residues include Asp30, Asp35, and Asp37. ADP is bound by residues 38–41, 79–80, Gly120, Met129, Arg166, and 179–181; these read HGIN, AS, and DPG.

In terms of assembly, homodimer. The dihydroxyacetone kinase complex is composed of a homodimer of DhaM, a homodimer of DhaK and the subunit DhaL. It depends on Mg(2+) as a cofactor.

The protein resides in the cytoplasm. The enzyme catalyses dihydroxyacetone + phosphoenolpyruvate = dihydroxyacetone phosphate + pyruvate. It functions in the pathway polyol metabolism; glycerol degradation. ADP-binding subunit of the dihydroxyacetone kinase, which is responsible for the phosphoenolpyruvate (PEP)-dependent phosphorylation of dihydroxyacetone. DhaL-ADP is converted to DhaL-ATP via a phosphoryl group transfer from DhaM and transmits it to dihydroxyacetone binds to DhaK. This chain is PEP-dependent dihydroxyacetone kinase 1, ADP-binding subunit DhaL, found in Listeria innocua serovar 6a (strain ATCC BAA-680 / CLIP 11262).